A 36-amino-acid polypeptide reads, in one-letter code: U1-ectatotoxin-Et1b subunit B (36 aa).

The cysteines at positions 11 and 33 are disulfide-linked.

This sequence belongs to the ectatomin family. Ectatomin-Et subfamily. In terms of assembly, heterodimer of subunits A and B; disulfide-linked. As to expression, expressed by the venom gland.

The protein resides in the secreted. It localises to the target cell membrane. The chain is U1-ectatotoxin-Et1b subunit B from Ectatomma tuberculatum (Selva ant).